Reading from the N-terminus, the 235-residue chain is Protein C1orf43 homolog (235 aa).

Residues 11–31 (VNVVLVMAYGSLVFVLLFIFV) form a helical membrane-spanning segment.

Its subcellular location is the membrane. The protein localises to the golgi apparatus. The protein resides in the mitochondrion. In terms of biological role, general regulator of phagocytosis. Required to uptake Gram negative bacterium by macrophages. This is Protein C1orf43 homolog from Rattus norvegicus (Rat).